A 173-amino-acid chain; its full sequence is Large ribosomal subunit protein uL10 (173 aa).

Belongs to the universal ribosomal protein uL10 family. Part of the ribosomal stalk of the 50S ribosomal subunit. The N-terminus interacts with L11 and the large rRNA to form the base of the stalk. The C-terminus forms an elongated spine to which L12 dimers bind in a sequential fashion forming a multimeric L10(L12)X complex.

In terms of biological role, forms part of the ribosomal stalk, playing a central role in the interaction of the ribosome with GTP-bound translation factors. The polypeptide is Large ribosomal subunit protein uL10 (Bifidobacterium animalis subsp. lactis (strain AD011)).